The sequence spans 245 residues: tRNA pseudouridine synthase A 2 (245 aa).

The Nucleophile role is filled by Asp53. Tyr111 is a binding site for substrate.

It belongs to the tRNA pseudouridine synthase TruA family. In terms of assembly, homodimer.

The catalysed reaction is uridine(38/39/40) in tRNA = pseudouridine(38/39/40) in tRNA. In terms of biological role, formation of pseudouridine at positions 38, 39 and 40 in the anticodon stem and loop of transfer RNAs. The protein is tRNA pseudouridine synthase A 2 of Bacillus cereus (strain ATCC 14579 / DSM 31 / CCUG 7414 / JCM 2152 / NBRC 15305 / NCIMB 9373 / NCTC 2599 / NRRL B-3711).